The primary structure comprises 1399 residues: DNA-directed RNA polymerase subunit beta' (1399 aa).

Cysteine 70, cysteine 72, cysteine 85, and cysteine 88 together coordinate Zn(2+). 3 residues coordinate Mg(2+): aspartate 460, aspartate 462, and aspartate 464. Cysteine 814, cysteine 888, cysteine 895, and cysteine 898 together coordinate Zn(2+).

Belongs to the RNA polymerase beta' chain family. In terms of assembly, the RNAP catalytic core consists of 2 alpha, 1 beta, 1 beta' and 1 omega subunit. When a sigma factor is associated with the core the holoenzyme is formed, which can initiate transcription. It depends on Mg(2+) as a cofactor. The cofactor is Zn(2+).

It carries out the reaction RNA(n) + a ribonucleoside 5'-triphosphate = RNA(n+1) + diphosphate. DNA-dependent RNA polymerase catalyzes the transcription of DNA into RNA using the four ribonucleoside triphosphates as substrates. The sequence is that of DNA-directed RNA polymerase subunit beta' from Pseudomonas entomophila (strain L48).